The following is a 218-amino-acid chain: Small ribosomal subunit protein uS3c (218 aa).

The KH type-2 domain occupies 47–118 (VQKEMRISSG…RLNVVITRVA (72 aa)).

It belongs to the universal ribosomal protein uS3 family. In terms of assembly, part of the 30S ribosomal subunit.

The protein localises to the plastid. Its subcellular location is the chloroplast. The polypeptide is Small ribosomal subunit protein uS3c (rps3) (Ceratophyllum demersum (Rigid hornwort)).